The sequence spans 65 residues: Oxiana weak toxin (65 aa).

Intrachain disulfides connect C3/C24, C6/C11, C17/C42, C46/C57, and C58/C63.

It belongs to the three-finger toxin family. Ancestral subfamily. Orphan group II sub-subfamily. In terms of tissue distribution, expressed by the venom gland.

The protein localises to the secreted. In terms of biological role, binds to muscle and neuronal nicotinic acetylcholine receptors (nAChR). It binds to extracellular domain of rat alpha-7/CHRNA7 nAChR (IC(50)=2.2 uM) and to Torpedo californica membranes (IC(50)=30 uM). This Naja oxiana (Central Asian cobra) protein is Oxiana weak toxin.